An 87-amino-acid polypeptide reads, in one-letter code: Small ribosomal subunit protein uS17 (87 aa).

The protein belongs to the universal ribosomal protein uS17 family. Part of the 30S ribosomal subunit.

Functionally, one of the primary rRNA binding proteins, it binds specifically to the 5'-end of 16S ribosomal RNA. This is Small ribosomal subunit protein uS17 from Geobacillus stearothermophilus (Bacillus stearothermophilus).